The primary structure comprises 326 residues: Biotin synthase (326 aa).

Residues 42–266 (NEIQLAALLN…LMPKSYVRLA (225 aa)) enclose the Radical SAM core domain. Residues Cys57, Cys61, and Cys64 each coordinate [4Fe-4S] cluster. 4 residues coordinate [2Fe-2S] cluster: Cys101, Cys132, Cys192, and Arg264.

This sequence belongs to the radical SAM superfamily. Biotin synthase family. As to quaternary structure, homodimer. [4Fe-4S] cluster serves as cofactor. It depends on [2Fe-2S] cluster as a cofactor.

It catalyses the reaction (4R,5S)-dethiobiotin + (sulfur carrier)-SH + 2 reduced [2Fe-2S]-[ferredoxin] + 2 S-adenosyl-L-methionine = (sulfur carrier)-H + biotin + 2 5'-deoxyadenosine + 2 L-methionine + 2 oxidized [2Fe-2S]-[ferredoxin]. The protein operates within cofactor biosynthesis; biotin biosynthesis; biotin from 7,8-diaminononanoate: step 2/2. Its function is as follows. Catalyzes the conversion of dethiobiotin (DTB) to biotin by the insertion of a sulfur atom into dethiobiotin via a radical-based mechanism. In Ehrlichia chaffeensis (strain ATCC CRL-10679 / Arkansas), this protein is Biotin synthase.